A 401-amino-acid polypeptide reads, in one-letter code: Cysteine desulfurase CsdA (401 aa).

The residue at position 222 (Lys222) is an N6-(pyridoxal phosphate)lysine. Cys358 functions as the Cysteine persulfide intermediate in the catalytic mechanism.

It belongs to the class-V pyridoxal-phosphate-dependent aminotransferase family. Csd subfamily. Homodimer. Forms a heterodimer with CsdE. Pyridoxal 5'-phosphate is required as a cofactor.

It catalyses the reaction (sulfur carrier)-H + L-cysteine = (sulfur carrier)-SH + L-alanine. The catalysed reaction is L-selenocysteine + AH2 = hydrogenselenide + L-alanine + A + H(+). The enzyme catalyses 3-sulfino-L-alanine + H2O = sulfite + L-alanine + H(+). With respect to regulation, cysteine desulfurase activity is increased 2-fold in the presence of CsdE. In terms of biological role, catalyzes the removal of elemental sulfur and selenium atoms from L-cysteine, L-cystine, L-selenocysteine, and L-selenocystine to produce L-alanine, and transiently retains the released sulfur atom on a cysteine residue, in the form of a persulfide. Can also desulfinate L-cysteine sulfinate (3-sulfino-L-alanine), which is the best substrate of the enzyme. Functions as a selenium delivery protein in the pathway for the biosynthesis of selenophosphate. Seems to participate in Fe/S biogenesis by recruiting the SufBCD-SufE proteins. Transfers sulfur to CsdE that increases the cysteine desulfurase activity of CsdA. Can also transfer sulfur directly to TcdA/CsdL in vitro. Appears to support the function of TcdA in the generation of cyclic threonylcarbamoyladenosine at position 37 (ct(6)A37) in tRNAs that read codons beginning with adenine. The protein is Cysteine desulfurase CsdA (csdA) of Escherichia coli (strain K12).